We begin with the raw amino-acid sequence, 118 residues long: DNA-binding protein MmarC5_1518 (118 aa).

Basic and acidic residues predominate over residues Met-1–Gln-12. The segment at Met-1–Gln-35 is disordered.

The protein belongs to the PDCD5 family.

This is DNA-binding protein MmarC5_1518 from Methanococcus maripaludis (strain C5 / ATCC BAA-1333).